Reading from the N-terminus, the 266-residue chain is Nickel import ATP-binding protein NikE (266 aa).

The 249-residue stretch at 4–252 (ISADNIVKIY…RHPASRLLRE (249 aa)) folds into the ABC transporter domain. 45-52 (GRSGCGKS) lines the ATP pocket.

This sequence belongs to the ABC transporter superfamily. Nickel importer (TC 3.A.1.5.3) family. The complex is composed of two ATP-binding proteins (NikD and NikE), two transmembrane proteins (NikB and NikC) and a solute-binding protein (NikA).

The protein resides in the cell inner membrane. It catalyses the reaction Ni(2+)(out) + ATP + H2O = Ni(2+)(in) + ADP + phosphate + H(+). In terms of biological role, part of the ABC transporter complex NikABCDE involved in nickel import. Responsible for energy coupling to the transport system. The polypeptide is Nickel import ATP-binding protein NikE (Brucella suis biovar 1 (strain 1330)).